The sequence spans 360 residues: Peptide chain release factor 1 (360 aa).

Gln-235 is subject to N5-methylglutamine. Residues Ala-281–Tyr-310 form a disordered region.

It belongs to the prokaryotic/mitochondrial release factor family. In terms of processing, methylated by PrmC. Methylation increases the termination efficiency of RF1.

It is found in the cytoplasm. In terms of biological role, peptide chain release factor 1 directs the termination of translation in response to the peptide chain termination codons UAG and UAA. The polypeptide is Peptide chain release factor 1 (Stenotrophomonas maltophilia (strain R551-3)).